A 300-amino-acid chain; its full sequence is NAD kinase (300 aa).

The active-site Proton acceptor is D77. NAD(+)-binding positions include 77 to 78 (DG), 151 to 152 (ND), H162, R179, D181, and 192 to 197 (TAYSLS).

It belongs to the NAD kinase family. A divalent metal cation is required as a cofactor.

It localises to the cytoplasm. The enzyme catalyses NAD(+) + ATP = ADP + NADP(+) + H(+). Involved in the regulation of the intracellular balance of NAD and NADP, and is a key enzyme in the biosynthesis of NADP. Catalyzes specifically the phosphorylation on 2'-hydroxyl of the adenosine moiety of NAD to yield NADP. The chain is NAD kinase from Cellvibrio japonicus (strain Ueda107) (Pseudomonas fluorescens subsp. cellulosa).